The following is a 255-amino-acid chain: tRNA uridine(34) hydroxylase (255 aa).

Positions 125–219 (ATPDTILLDV…YLEQIPESES (95 aa)) constitute a Rhodanese domain. Catalysis depends on cysteine 179, which acts as the Cysteine persulfide intermediate.

This sequence belongs to the TrhO family.

It catalyses the reaction uridine(34) in tRNA + AH2 + O2 = 5-hydroxyuridine(34) in tRNA + A + H2O. Catalyzes oxygen-dependent 5-hydroxyuridine (ho5U) modification at position 34 in tRNAs. In Nitrobacter winogradskyi (strain ATCC 25391 / DSM 10237 / CIP 104748 / NCIMB 11846 / Nb-255), this protein is tRNA uridine(34) hydroxylase.